A 32-amino-acid polypeptide reads, in one-letter code: Delta-conotoxin-like CnVIB (32 aa).

Cystine bridges form between cysteine 3/cysteine 18, cysteine 10/cysteine 22, and cysteine 17/cysteine 27. 4-hydroxyproline occurs at positions 6 and 14.

Belongs to the conotoxin O1 superfamily. Expressed by the venom duct.

The protein resides in the secreted. Functionally, delta-conotoxins bind to site 6 of voltage-gated sodium channels (Nav) and inhibit the inactivation process. This toxin acts on Nav1.4/SCN4A and Nav1.6/SCN8A (EC(50)=2.3 uM). In Conus consors (Singed cone), this protein is Delta-conotoxin-like CnVIB.